Reading from the N-terminus, the 258-residue chain is Probable glycerol uptake facilitator protein (258 aa).

A run of 2 helical transmembrane segments spans residues W11 to V31 and T50 to F70. An NPA 1 motif is present at residues N77–A79. The next 3 helical transmembrane spans lie at A95–A115, F152–F172, and V180–A200. The short motif at N206 to A208 is the NPA 2 element. A helical membrane pass occupies residues W233–S253.

This sequence belongs to the MIP/aquaporin (TC 1.A.8) family.

The protein resides in the cell membrane. It catalyses the reaction glycerol(in) = glycerol(out). Functionally, mediates glycerol diffusion across the cytoplasmic membrane via a pore-type mechanism. In Mycoplasma genitalium (strain ATCC 33530 / DSM 19775 / NCTC 10195 / G37) (Mycoplasmoides genitalium), this protein is Probable glycerol uptake facilitator protein (glpF).